A 667-amino-acid polypeptide reads, in one-letter code: Bifunctional polymyxin resistance protein ArnA (667 aa).

Residues 1–304 (MKAIVFAYHD…EMGIVTDVRL (304 aa)) are formyltransferase ArnAFT. His104 acts as the Proton donor; for formyltransferase activity in catalysis. (6R)-10-formyltetrahydrofolate-binding positions include Arg114 and 136-140 (VKKAD). A dehydrogenase ArnADH region spans residues 314–667 (RRTRVLILGV…TAAPKDELNA (354 aa)). NAD(+) is bound by residues Asp347 and 368 to 369 (DI). Residues Ala393, Tyr398, and 432–433 (TS) each bind UDP-alpha-D-glucuronate. The Proton acceptor; for decarboxylase activity role is filled by Glu434. UDP-alpha-D-glucuronate is bound by residues Arg460, Asn492, 526–535 (KLVDGGAQKR), and Tyr613. Arg619 functions as the Proton donor; for decarboxylase activity in the catalytic mechanism.

The protein in the N-terminal section; belongs to the Fmt family. UDP-L-Ara4N formyltransferase subfamily. It in the C-terminal section; belongs to the NAD(P)-dependent epimerase/dehydratase family. UDP-glucuronic acid decarboxylase subfamily. Homohexamer, formed by a dimer of trimers.

It catalyses the reaction UDP-alpha-D-glucuronate + NAD(+) = UDP-beta-L-threo-pentopyranos-4-ulose + CO2 + NADH. The enzyme catalyses UDP-4-amino-4-deoxy-beta-L-arabinose + (6R)-10-formyltetrahydrofolate = UDP-4-deoxy-4-formamido-beta-L-arabinose + (6S)-5,6,7,8-tetrahydrofolate + H(+). The protein operates within nucleotide-sugar biosynthesis; UDP-4-deoxy-4-formamido-beta-L-arabinose biosynthesis; UDP-4-deoxy-4-formamido-beta-L-arabinose from UDP-alpha-D-glucuronate: step 1/3. Its pathway is nucleotide-sugar biosynthesis; UDP-4-deoxy-4-formamido-beta-L-arabinose biosynthesis; UDP-4-deoxy-4-formamido-beta-L-arabinose from UDP-alpha-D-glucuronate: step 3/3. It participates in bacterial outer membrane biogenesis; lipopolysaccharide biosynthesis. Functionally, bifunctional enzyme that catalyzes the oxidative decarboxylation of UDP-glucuronic acid (UDP-GlcUA) to UDP-4-keto-arabinose (UDP-Ara4O) and the addition of a formyl group to UDP-4-amino-4-deoxy-L-arabinose (UDP-L-Ara4N) to form UDP-L-4-formamido-arabinose (UDP-L-Ara4FN). The modified arabinose is attached to lipid A and is required for resistance to polymyxin and cationic antimicrobial peptides. The sequence is that of Bifunctional polymyxin resistance protein ArnA from Yersinia pseudotuberculosis serotype IB (strain PB1/+).